The chain runs to 92 residues: Sec-independent protein translocase protein TatA (92 aa).

Residues 2 to 22 traverse the membrane as a helical segment; the sequence is IPANFGGTELIILLVIILLLF. The interval 43 to 92 is disordered; the sequence is KGTSGAYEELEEKKGEEEKDEGGKKEAEASGRGEEEQQARAAGEAGRKQG. Basic and acidic residues predominate over residues 53–80; the sequence is EEKKGEEEKDEGGKKEAEASGRGEEEQQ.

This sequence belongs to the TatA/E family. In terms of assembly, the Tat system comprises two distinct complexes: a TatABC complex, containing multiple copies of TatA, TatB and TatC subunits, and a separate TatA complex, containing only TatA subunits. Substrates initially bind to the TatABC complex, which probably triggers association of the separate TatA complex to form the active translocon.

It localises to the cell membrane. In terms of biological role, part of the twin-arginine translocation (Tat) system that transports large folded proteins containing a characteristic twin-arginine motif in their signal peptide across membranes. TatA could form the protein-conducting channel of the Tat system. The polypeptide is Sec-independent protein translocase protein TatA (Rubrobacter xylanophilus (strain DSM 9941 / JCM 11954 / NBRC 16129 / PRD-1)).